The following is a 146-amino-acid chain: MPEPAASSRGCVLGFDFGEKRIGVAIGEHLLGIAHPLVTIDAEANDKRFAAIAGLIEEWQPEMLVVGLPSYLNGDEHALTQLCRKFARRLEGRFNLPVQLVDERLSSAEASQTLKQSGISGRKQKSVLDQVAAQHILQSYFDGLAS.

Belongs to the YqgF nuclease family.

The protein localises to the cytoplasm. Its function is as follows. Could be a nuclease involved in processing of the 5'-end of pre-16S rRNA. The protein is Putative pre-16S rRNA nuclease of Methylobacillus flagellatus (strain ATCC 51484 / DSM 6875 / VKM B-1610 / KT).